Reading from the N-terminus, the 181-residue chain is Protein Syd (181 aa).

The protein belongs to the Syd family.

Its subcellular location is the cell inner membrane. Interacts with the SecY protein in vivo. May bind preferentially to an uncomplexed state of SecY, thus functioning either as a chelating agent for excess SecY in the cell or as a regulatory factor that negatively controls the translocase function. In Shigella flexneri serotype 5b (strain 8401), this protein is Protein Syd.